The primary structure comprises 226 residues: MRRAIGVTVLAVVGLLLLPYLLTPLYRTGHPVSTLMIWRKLSGASMSRQWIDFAAMSPALPRSVVASEDAKFCSHHGIDWDSLRDVLDDAEDGEVKRGGSTITQQVAKNLFLWPGRSVIRKALEFPLAMWIDAVLPKQRILEIYLNIAEWGPDGQFGVEAGSRYAFGRSATGLTAREAALMAAILPNPVRRSARKPGPGVRRLAGTYMVRARAAELRSCWRDDRGS.

Residues 5–25 (IGVTVLAVVGLLLLPYLLTPL) traverse the membrane as a helical segment.

It belongs to the glycosyltransferase 51 family.

Its subcellular location is the cell inner membrane. It carries out the reaction [GlcNAc-(1-&gt;4)-Mur2Ac(oyl-L-Ala-gamma-D-Glu-L-Lys-D-Ala-D-Ala)](n)-di-trans,octa-cis-undecaprenyl diphosphate + beta-D-GlcNAc-(1-&gt;4)-Mur2Ac(oyl-L-Ala-gamma-D-Glu-L-Lys-D-Ala-D-Ala)-di-trans,octa-cis-undecaprenyl diphosphate = [GlcNAc-(1-&gt;4)-Mur2Ac(oyl-L-Ala-gamma-D-Glu-L-Lys-D-Ala-D-Ala)](n+1)-di-trans,octa-cis-undecaprenyl diphosphate + di-trans,octa-cis-undecaprenyl diphosphate + H(+). Its pathway is cell wall biogenesis; peptidoglycan biosynthesis. Its function is as follows. Peptidoglycan polymerase that catalyzes glycan chain elongation from lipid-linked precursors. The polypeptide is Biosynthetic peptidoglycan transglycosylase (Nitrobacter hamburgensis (strain DSM 10229 / NCIMB 13809 / X14)).